The chain runs to 444 residues: MLKVAIVGKPNVGKSTLFNRIIKVNKSIVDDKPGITRDRIYANAEWLTQHFKLIDTGGLMLDEFDFKKQIELQVNYAITEADVIVFLVSYKEGINNDDHYVAKILKKHKNKKILLAVNKSETRNKDSYDDHEYLRFGFQKPYFISANHGIGIGDLLDAIVDTKLKEIKEEDTFKFCIIGRPNVGKSSLVNCILNEDRMITSNIANTTRDAIDSNFKKDNLLYTIIDTAGIRRKGKIQENVDKYAYLRVEQSISRSNLIVIVLDGSEEFNEQDEVIAGLAHKANIPSIIVVNKWDIVKEKDEKTMNKFIKTIRIKFKFLSWTPIVFLSAIENKRINTLFNEIKSIRENLNLKFNSKILTDLVFKLQMLNSPPLFNRGRIKINHVTQVDGQIPTFVLFCNNPEYLHFSYARYLENEIRKSLGLNNVPITLYFKNKTDKIRGKKNDK.

2 consecutive EngA-type G domains span residues 2 to 167 and 173 to 349; these read LKVA…LKEI and FKFC…ENLN. Residues 8 to 15, 55 to 59, 118 to 121, 179 to 186, 226 to 230, and 291 to 294 each bind GTP; these read GKPNVGKS, DTGGL, NKSE, GRPNVGKS, DTAGI, and NKWD. The region spanning 350 to 434 is the KH-like domain; the sequence is LKFNSKILTD…PITLYFKNKT (85 aa).

It belongs to the TRAFAC class TrmE-Era-EngA-EngB-Septin-like GTPase superfamily. EngA (Der) GTPase family. Associates with the 50S ribosomal subunit.

In terms of biological role, GTPase that plays an essential role in the late steps of ribosome biogenesis. This is GTPase Der from Malacoplasma penetrans (strain HF-2) (Mycoplasma penetrans).